The sequence spans 232 residues: Thiamine import ATP-binding protein ThiQ (232 aa).

Residues 2–230 enclose the ABC transporter domain; sequence LKLTDITWLY…KGSASAIWGI (229 aa). 32–39 is an ATP binding site; the sequence is GPSGAGKS.

The protein belongs to the ABC transporter superfamily. Thiamine importer (TC 3.A.1.19.1) family. In terms of assembly, the complex is composed of two ATP-binding proteins (ThiQ), two transmembrane proteins (ThiP) and a solute-binding protein (ThiB).

The protein localises to the cell inner membrane. It carries out the reaction thiamine(out) + ATP + H2O = thiamine(in) + ADP + phosphate + H(+). Part of the ABC transporter complex ThiBPQ involved in thiamine import. Responsible for energy coupling to the transport system. The chain is Thiamine import ATP-binding protein ThiQ from Shigella flexneri.